The primary structure comprises 1093 residues: Probable cellulose synthase A catalytic subunit 3 [UDP-forming] (1093 aa).

Residues 1–280 are Cytoplasmic-facing; the sequence is MEASAGLVAG…PSSQINPYRM (280 aa). Residues Cys39, Cys42, Cys58, Cys61, Cys66, Cys69, Cys81, and Cys84 each contribute to the Zn(2+) site. The RING-type; degenerate zinc finger occupies 39-85; that stretch reads CQICGDDVGLNPDGEPFVACNECAFPVCRDCYEYERREGTQNCPQCK. Residues 233-246 are compositionally biased toward basic and acidic residues; the sequence is LHQMRNDGGGKDWD. Residues 233–257 form a disordered region; the sequence is LHQMRNDGGGKDWDGDGDDGDLPLM. Residues 281–301 traverse the membrane as a helical segment; it reads VIIIRLVVLGFFFHYRVMHPV. At 302 to 303 the chain is on the extracellular side; that stretch reads PD. Residues 304–324 form a helical membrane-spanning segment; it reads AFALWLISVICEIWFAMSWIL. Residues 325 to 869 are Cytoplasmic-facing; it reads DQFPKWFPIE…CLERFSYINS (545 aa). UDP-alpha-D-glucose-binding residues include Ser363, Lys369, Glu370, and Asp399. Residue Asp399 is part of the active site. Residues 453 to 480 adopt a coiled-coil conformation; sequence VRERRAMKREYEEFKVRINALVAKAQKV. Position 540 (Lys540) interacts with UDP-alpha-D-glucose. Lys541 and Asp565 together coordinate Mn(2+). Residue Asp793 is part of the active site. The chain crosses the membrane as a helical span at residues 870-890; it reads IVYPFTSIPLLAYCTLPAICL. The Extracellular portion of the chain corresponds to 891-902; sequence LTGKFITPELTN. The helical transmembrane segment at 903–923 threads the bilayer; the sequence is VASLWFMSLFICIFATGILEM. The Cytoplasmic portion of the chain corresponds to 924–939; it reads RWSGVGIDDWWRNEQF. Residues 940–960 form a helical membrane-spanning segment; that stretch reads WVIGGVSSHLFALFQGLLKVI. Topologically, residues 961-988 are extracellular; it reads AGIDTSFTVTSKGGDDEEFSELYTFKWT. Residues 989–1009 form a helical membrane-spanning segment; sequence TLLIPPTTLLLLNFIGVVAGV. The Cytoplasmic segment spans residues 1010–1020; it reads SNAINNGYESW. A helical membrane pass occupies residues 1021–1041; it reads GPLFGKLFFAFWVIVHLYPFL. At 1042-1050 the chain is on the extracellular side; sequence KGLVGRQNR. The helical transmembrane segment at 1051-1071 threads the bilayer; that stretch reads TPTIVIVWSILLASIFSLLWV. At 1072–1093 the chain is on the cytoplasmic side; the sequence is RIDPFLAKNDGPLLEECGLDCN.

The protein belongs to the glycosyltransferase 2 family. Plant cellulose synthase subfamily. Mn(2+) is required as a cofactor. Zn(2+) serves as cofactor.

The protein localises to the cell membrane. The catalysed reaction is [(1-&gt;4)-beta-D-glucosyl](n) + UDP-alpha-D-glucose = [(1-&gt;4)-beta-D-glucosyl](n+1) + UDP + H(+). It functions in the pathway glycan metabolism; plant cellulose biosynthesis. Functionally, probable catalytic subunit of cellulose synthase terminal complexes ('rosettes'), required for beta-1,4-glucan microfibril crystallization, a major mechanism of the cell wall formation. This Oryza sativa subsp. japonica (Rice) protein is Probable cellulose synthase A catalytic subunit 3 [UDP-forming] (CESA3).